The primary structure comprises 599 residues: Tryptophan 2-C-methyltransferase (599 aa).

A B12-binding domain is found at 4-149; that stretch reads KGTVALINPN…RALAEGRSAD (146 aa). Residues 167–197 form a disordered region; sequence RVAPPALDPRAAPAPSSSPSPSPAPSSSSAP. Positions 168 to 181 are enriched in low complexity; it reads VAPPALDPRAAPAP. The 254-residue stretch at 239–492 folds into the Radical SAM core domain; it reads YREGGLGSIL…IEYERQFMFD (254 aa). The [4Fe-4S] cluster site is built by Cys253, Cys257, and Cys260.

The cofactor is [4Fe-4S] cluster. It depends on cob(II)alamin as a cofactor.

The catalysed reaction is L-tryptophan + S-adenosyl-L-methionine = 2-methyl-L-tryptophan + S-adenosyl-L-homocysteine + H(+). In terms of biological role, involved in the biosynthetic pathway of the antibiotic thiostrepton A. First, TsrM catalyzes the transfer of a methyl group from S-adenosyl methionine (SAM) to cobalamin, leading to the formation of methylcobalamin (CH3-cobalamin) and S-adenosyl-L-homocysteine (SAH). Then the methyl group is transferred to the C2 position of tryptophan (Trp) with the concerted action of the radical SAM [4Fe-4S] center, leading to the production of methyltryptophan. The sequence is that of Tryptophan 2-C-methyltransferase from Streptomyces laurentii.